The sequence spans 248 residues: Transcription factor Spi-C (248 aa).

The segment at residues 111–194 (LRLFEYLHES…IRRKLTYQFS (84 aa)) is a DNA-binding region (ETS).

The protein belongs to the ETS family. Binds DNA as a monomer.

The protein localises to the nucleus. In terms of biological role, controls the development of red pulp macrophages required for red blood cells recycling and iron homeostasis. Transcription factor that binds to the PU-box, a purine-rich DNA sequence (5'-GAGGA[AT]-3') that can act as a lymphoid-specific enhancer. Regulates VCAM1 gene expression. The protein is Transcription factor Spi-C (SPIC) of Bos taurus (Bovine).